The sequence spans 158 residues: Transcription elongation factor GreA (158 aa).

Residues 47–73 adopt a coiled-coil conformation; that stretch reads AEYHAAREKQSFIEGRIQELQAKLARA.

The protein belongs to the GreA/GreB family.

Its function is as follows. Necessary for efficient RNA polymerase transcription elongation past template-encoded arresting sites. The arresting sites in DNA have the property of trapping a certain fraction of elongating RNA polymerases that pass through, resulting in locked ternary complexes. Cleavage of the nascent transcript by cleavage factors such as GreA or GreB allows the resumption of elongation from the new 3'terminus. GreA releases sequences of 2 to 3 nucleotides. The polypeptide is Transcription elongation factor GreA (Thermodesulfovibrio yellowstonii (strain ATCC 51303 / DSM 11347 / YP87)).